The following is a 1066-amino-acid chain: Zinc finger and BTB domain-containing protein 21 (1066 aa).

The region spanning 30-96 (CDVLLIVGDQ…IYSSSLFVEK (67 aa)) is the BTB domain. The mediates homodimerization stretch occupies residues 30–96 (CDVLLIVGDQ…IYSSSLFVEK (67 aa)). A Glycyl lysine isopeptide (Lys-Gly) (interchain with G-Cter in SUMO1); alternate cross-link involves residue Lys-40. Residue Lys-40 forms a Glycyl lysine isopeptide (Lys-Gly) (interchain with G-Cter in SUMO2); alternate linkage. The segment covering 154-177 (SRNEAQGKTVSQNQPDVSHTSRPS) has biased composition (polar residues). The segment at 154–196 (SRNEAQGKTVSQNQPDVSHTSRPSPSIAVKANTNKPHVPKPIE) is disordered. Glycyl lysine isopeptide (Lys-Gly) (interchain with G-Cter in SUMO2) cross-links involve residues Lys-255, Lys-266, Lys-273, Lys-312, and Lys-337. Residues Ser-345 and Ser-381 each carry the phosphoserine modification. Lys-383 is covalently cross-linked (Glycyl lysine isopeptide (Lys-Gly) (interchain with G-Cter in SUMO2)). Residues 388 to 399 (DCSEKTALDDRP) show a composition bias toward basic and acidic residues. 3 disordered regions span residues 388–442 (DCSE…DPSD), 454–485 (TAAASSSSVTRDLSLKTEDDQKDMSRLPAKRR), and 498–525 (KVNEHGSPVSEDNFEEGSSPTLLDADFP). Residues Ser-411 and Ser-422 each carry the phosphoserine modification. Lys-430 participates in a covalent cross-link: Glycyl lysine isopeptide (Lys-Gly) (interchain with G-Cter in SUMO2). Thr-431 is subject to Phosphothreonine. A phosphoserine mark is found at Ser-434, Ser-435, and Ser-438. Positions 466 to 478 (LSLKTEDDQKDMS) are enriched in basic and acidic residues. Glycyl lysine isopeptide (Lys-Gly) (interchain with G-Cter in SUMO2) cross-links involve residues Lys-469 and Lys-475. C2H2-type zinc fingers lie at residues 546–569 (FKCKHCLKIFRSTAGLHRHVNMYH) and 575–598 (YACDICHKRFHTNFKVWTHCQTQH). At Ser-605 the chain carries Phosphoserine. Residues Lys-617, Lys-643, and Lys-659 each participate in a glycyl lysine isopeptide (Lys-Gly) (interchain with G-Cter in SUMO2) cross-link. The C2H2-type 3 zinc finger occupies 670–692 (YICTYCGKAYRFLSQFKQHIKMH). A Glycyl lysine isopeptide (Lys-Gly) (interchain with G-Cter in SUMO2) cross-link involves residue Lys-702. At Ser-714 the chain carries Phosphoserine. The segment at 748 to 770 (AVCPYCSLRFFSPELKQEHESKC) adopts a C2H2-type 4; atypical zinc-finger fold. Glycyl lysine isopeptide (Lys-Gly) (interchain with G-Cter in SUMO2) cross-links involve residues Lys-763 and Lys-785. Residues 775-798 (LTCLECMRTFKSSFSIWRHQVEVH) form a C2H2-type 5 zinc finger. The disordered stretch occupies residues 806–840 (TENFSLPVLDHNGDVTGSSRPQSQPEPNKVNHIVT). Residues 820–831 (VTGSSRPQSQPE) are compositionally biased toward polar residues. Lys-875 participates in a covalent cross-link: Glycyl lysine isopeptide (Lys-Gly) (interchain with G-Cter in SUMO2). Lys-879 participates in a covalent cross-link: Glycyl lysine isopeptide (Lys-Gly) (interchain with G-Cter in SUMO1); alternate. Lys-879 participates in a covalent cross-link: Glycyl lysine isopeptide (Lys-Gly) (interchain with G-Cter in SUMO2); alternate. The disordered stretch occupies residues 879–906 (KEEPVEEAEEEAPEASTAPKEAGPSKEA). The segment covering 882-891 (PVEEAEEEAP) has biased composition (acidic residues). Residues 909–932 (WPCEKCGKMFTVHKQLERHQELLC) form a C2H2-type 6; atypical zinc finger. Residue Lys-935 forms a Glycyl lysine isopeptide (Lys-Gly) (interchain with G-Cter in SUMO2) linkage. A C2H2-type 7 zinc finger spans residues 937 to 959 (FICHVCNKAFRTNFRLWSHFQSH). Positions 963 to 1014 (ASEESAHKESEVCPVPTNSPSPPPLPPPPPLPKIQPLEPDSPTGLSENPTPA) are disordered. Positions 979–995 (TNSPSPPPLPPPPPLPK) are enriched in pro residues. Ser-1003 bears the Phosphoserine mark. The C2H2-type 8 zinc-finger motif lies at 1043-1065 (FMCKLCHRTFKTAFSLWSHEQTH).

As to quaternary structure, homodimer. Interacts with ZBTB14. As to expression, ubiquitous in fetal and adult tissues.

The protein resides in the nucleus. Acts as a transcription repressor. This is Zinc finger and BTB domain-containing protein 21 (ZBTB21) from Homo sapiens (Human).